The primary structure comprises 497 residues: Putative aldehyde dehydrogenase AldA (497 aa).

Position 213 to 219 (213 to 219 (GKGSESG)) interacts with NAD(+). Catalysis depends on residues glutamate 257 and cysteine 291.

The protein belongs to the aldehyde dehydrogenase family.

It carries out the reaction an aldehyde + NAD(+) + H2O = a carboxylate + NADH + 2 H(+). This Staphylococcus epidermidis (strain ATCC 35984 / DSM 28319 / BCRC 17069 / CCUG 31568 / BM 3577 / RP62A) protein is Putative aldehyde dehydrogenase AldA (aldA).